Consider the following 310-residue polypeptide: N-acetyl-gamma-glutamyl-phosphate reductase (310 aa).

Residue Cys-117 is part of the active site.

It belongs to the NAGSA dehydrogenase family. Type 2 subfamily.

The protein resides in the cytoplasm. The catalysed reaction is N-acetyl-L-glutamate 5-semialdehyde + phosphate + NADP(+) = N-acetyl-L-glutamyl 5-phosphate + NADPH + H(+). Its pathway is amino-acid biosynthesis; L-arginine biosynthesis; N(2)-acetyl-L-ornithine from L-glutamate: step 3/4. In terms of biological role, catalyzes the NADPH-dependent reduction of N-acetyl-5-glutamyl phosphate to yield N-acetyl-L-glutamate 5-semialdehyde. This is N-acetyl-gamma-glutamyl-phosphate reductase from Brucella abortus (strain S19).